A 445-amino-acid chain; its full sequence is Signal recognition particle 54 kDa protein (445 aa).

GTP is bound by residues 106–113, 186–190, and 244–247; these read GLQGSGKT, DTAGR, and TKLD.

It belongs to the GTP-binding SRP family. SRP54 subfamily. As to quaternary structure, part of the signal recognition particle protein translocation system, which is composed of SRP and FtsY. Archaeal SRP consists of a 7S RNA molecule of 300 nucleotides and two protein subunits: SRP54 and SRP19.

It localises to the cytoplasm. It carries out the reaction GTP + H2O = GDP + phosphate + H(+). Functionally, involved in targeting and insertion of nascent membrane proteins into the cytoplasmic membrane. Binds to the hydrophobic signal sequence of the ribosome-nascent chain (RNC) as it emerges from the ribosomes. The SRP-RNC complex is then targeted to the cytoplasmic membrane where it interacts with the SRP receptor FtsY. In Methanobrevibacter smithii (strain ATCC 35061 / DSM 861 / OCM 144 / PS), this protein is Signal recognition particle 54 kDa protein.